We begin with the raw amino-acid sequence, 270 residues long: Sorting nexin-11 (270 aa).

The 117-residue stretch at 16–132 (VITVRVQDPR…HLFLQSQLSV (117 aa)) folds into the PX domain. Positions 59, 85, and 99 each coordinate a 1,2-diacyl-sn-glycero-3-phospho-(1D-myo-inositol-3-phosphate). Positions 135–139 (IEACV) are important for membrane trafficking. The segment covering 168–177 (GSSHLAEGDQ) has biased composition (basic and acidic residues). 2 disordered regions span residues 168–244 (GSSH…LSAS) and 251–270 (LGGG…VLEK). Over residues 218–227 (LESPTLPPTS) the composition is skewed to pro residues.

The protein belongs to the sorting nexin family. Monomer. Interacts with TRPV3; this interaction promotes TRPV3 trafficking from the cell membrane to lysosome for degradation.

The protein resides in the cell membrane. It is found in the endosome. The protein localises to the cytoplasm. In terms of biological role, phosphoinositide-binding protein involved in protein sorting and membrane trafficking in endosomes. Regulates the levels of TRPV3 by promoting its trafficking from the cell membrane to lysosome for degradation. This Bos taurus (Bovine) protein is Sorting nexin-11 (SNX11).